Reading from the N-terminus, the 161-residue chain is DNA-directed RNA polymerase 18 kDa subunit (161 aa).

Belongs to the poxviridae DNA-directed RNA polymerase 18 kDa subunit family. In terms of assembly, the DNA-dependent RNA polymerase used for intermediate and late genes expression consists of eight subunits Rpo30/OPG66, Rpo7/OPG90, Rpo22/OPG103, Rpo147/OPG105, Rpo18/OPG119, Rpo19/OPG131, Rpo132/OPG151 and Rpo35/OPG156. The same holoenzyme, with the addition of the transcription-specificity factor OPG109, is used for early gene expression. Post-translationally, apparently non-glycosylated.

It localises to the virion. The enzyme catalyses RNA(n) + a ribonucleoside 5'-triphosphate = RNA(n+1) + diphosphate. Its function is as follows. Part of the DNA-dependent RNA polymerase which catalyzes the transcription of viral DNA into RNA using the four ribonucleoside triphosphates as substrates. Responsible for the transcription of early, intermediate and late genes. DNA-dependent RNA polymerase associates with the early transcription factor (ETF), itself composed of OPG118 and OPG133, thereby allowing the early genes transcription. Late transcription, and probably also intermediate transcription, require newly synthesized RNA polymerase. This is DNA-directed RNA polymerase 18 kDa subunit (OPG119) from Cynomys gunnisoni (Gunnison's prairie dog).